Consider the following 443-residue polypeptide: Ribosomal protein uS12 methylthiotransferase RimO (443 aa).

Residues 1 to 114 (MGFVSLGCPK…VMQAVHTHLP (114 aa)) form the MTTase N-terminal domain. [4Fe-4S] cluster contacts are provided by Cys-8, Cys-44, Cys-73, Cys-145, Cys-149, and Cys-152. Residues 131–372 (LTPKHYAYLK…MEVAEEVSAR (242 aa)) form the Radical SAM core domain. Residues 375–443 (QRKVGQTLRV…ADGHDLWGAV (69 aa)) enclose the TRAM domain.

Belongs to the methylthiotransferase family. RimO subfamily. [4Fe-4S] cluster is required as a cofactor.

It is found in the cytoplasm. The enzyme catalyses L-aspartate(89)-[ribosomal protein uS12]-hydrogen + (sulfur carrier)-SH + AH2 + 2 S-adenosyl-L-methionine = 3-methylsulfanyl-L-aspartate(89)-[ribosomal protein uS12]-hydrogen + (sulfur carrier)-H + 5'-deoxyadenosine + L-methionine + A + S-adenosyl-L-homocysteine + 2 H(+). Its function is as follows. Catalyzes the methylthiolation of an aspartic acid residue of ribosomal protein uS12. In Cupriavidus necator (strain ATCC 17699 / DSM 428 / KCTC 22496 / NCIMB 10442 / H16 / Stanier 337) (Ralstonia eutropha), this protein is Ribosomal protein uS12 methylthiotransferase RimO.